The following is a 244-amino-acid chain: 1-(5-phosphoribosyl)-5-[(5-phosphoribosylamino)methylideneamino] imidazole-4-carboxamide isomerase (244 aa).

Asp8 (proton acceptor) is an active-site residue. The Proton donor role is filled by Asp131.

It belongs to the HisA/HisF family.

The protein resides in the cytoplasm. The catalysed reaction is 1-(5-phospho-beta-D-ribosyl)-5-[(5-phospho-beta-D-ribosylamino)methylideneamino]imidazole-4-carboxamide = 5-[(5-phospho-1-deoxy-D-ribulos-1-ylimino)methylamino]-1-(5-phospho-beta-D-ribosyl)imidazole-4-carboxamide. Its pathway is amino-acid biosynthesis; L-histidine biosynthesis; L-histidine from 5-phospho-alpha-D-ribose 1-diphosphate: step 4/9. This Thermomicrobium roseum (strain ATCC 27502 / DSM 5159 / P-2) protein is 1-(5-phosphoribosyl)-5-[(5-phosphoribosylamino)methylideneamino] imidazole-4-carboxamide isomerase.